The primary structure comprises 283 residues: NifU-like protein 4, mitochondrial (283 aa).

The transit peptide at 1–48 (MKGIARLVTSLSRIGGRKVVSGTSTVTSSSSSSLLLSRRSLFISATNL) directs the protein to the mitochondrion.

It belongs to the NifU family. In terms of tissue distribution, predominantly expressed in roots.

The protein resides in the mitochondrion. Its function is as follows. Molecular scaffold for [Fe-S] cluster assembly of mitochondrial iron-sulfur proteins. The sequence is that of NifU-like protein 4, mitochondrial (NIFU4) from Arabidopsis thaliana (Mouse-ear cress).